The primary structure comprises 386 residues: Succinate--CoA ligase [ADP-forming] subunit beta (386 aa).

Positions 9–244 (KEILHKFNVP…YDEEVKEEIE (236 aa)) constitute an ATP-grasp domain. Residues Lys46, 53–55 (GRG), Glu99, Ser102, and Glu107 contribute to the ATP site. Asn199 and Asp213 together coordinate Mg(2+). Substrate is bound by residues Asn264 and 321-323 (GIM).

Belongs to the succinate/malate CoA ligase beta subunit family. In terms of assembly, heterotetramer of two alpha and two beta subunits. The cofactor is Mg(2+).

The enzyme catalyses succinate + ATP + CoA = succinyl-CoA + ADP + phosphate. It catalyses the reaction GTP + succinate + CoA = succinyl-CoA + GDP + phosphate. Its pathway is carbohydrate metabolism; tricarboxylic acid cycle; succinate from succinyl-CoA (ligase route): step 1/1. In terms of biological role, succinyl-CoA synthetase functions in the citric acid cycle (TCA), coupling the hydrolysis of succinyl-CoA to the synthesis of either ATP or GTP and thus represents the only step of substrate-level phosphorylation in the TCA. The beta subunit provides nucleotide specificity of the enzyme and binds the substrate succinate, while the binding sites for coenzyme A and phosphate are found in the alpha subunit. This Wolbachia pipientis subsp. Culex pipiens (strain wPip) protein is Succinate--CoA ligase [ADP-forming] subunit beta.